A 156-amino-acid polypeptide reads, in one-letter code: MENEKNYRPNVAAIVLSSSYPFECKIFIAKRSDMDNIWQFPQGGIDKGESAKNALFRELKEEIGTDEVEIIAEYPEWLSYDFPGKIVKKMYPYDGQIQKYFLVRLKHGATININTKHPEFDDYQFVSVKQIFEMINHFKKNIYVKVIKYFEEKGYI.

One can recognise a Nudix hydrolase domain in the interval 6 to 148 (NYRPNVAAIV…KKNIYVKVIK (143 aa)). A Nudix box motif is present at residues 43 to 64 (GGIDKGESAKNALFRELKEEIG).

The protein belongs to the Nudix hydrolase family. RppH subfamily. A divalent metal cation serves as cofactor.

Accelerates the degradation of transcripts by removing pyrophosphate from the 5'-end of triphosphorylated RNA, leading to a more labile monophosphorylated state that can stimulate subsequent ribonuclease cleavage. This is RNA pyrophosphohydrolase from Campylobacter jejuni subsp. doylei (strain ATCC BAA-1458 / RM4099 / 269.97).